Reading from the N-terminus, the 115-residue chain is uncharacterized protein (115 aa).

Residues 1–20 form the signal peptide; the sequence is MKTFFRTVLFGSLMAVCANS.

This is an uncharacterized protein from Escherichia coli O6:H1 (strain CFT073 / ATCC 700928 / UPEC).